Reading from the N-terminus, the 398-residue chain is S-adenosylmethionine decarboxylase proenzyme (398 aa).

Active-site residues include Glu-18 and Glu-21. The active-site Schiff-base intermediate with substrate; via pyruvic acid is the Ser-78. The residue at position 78 (Ser-78) is a Pyruvic acid (Ser); by autocatalysis. Residue Cys-92 is the Proton donor; for catalytic activity of the active site. Residues Ser-243 and His-256 each act as proton acceptor; for processing activity in the active site.

It belongs to the eukaryotic AdoMetDC family. Pyruvate serves as cofactor. Is synthesized initially as an inactive proenzyme. Formation of the active enzyme involves a self-maturation process in which the active site pyruvoyl group is generated from an internal serine residue via an autocatalytic post-translational modification. Two non-identical subunits are generated from the proenzyme in this reaction, and the pyruvate is formed at the N-terminus of the alpha chain, which is derived from the carboxyl end of the proenzyme. The post-translation cleavage follows an unusual pathway, termed non-hydrolytic serinolysis, in which the side chain hydroxyl group of the serine supplies its oxygen atom to form the C-terminus of the beta chain, while the remainder of the serine residue undergoes an oxidative deamination to produce ammonia and the pyruvoyl group blocking the N-terminus of the alpha chain.

It carries out the reaction S-adenosyl-L-methionine + H(+) = S-adenosyl 3-(methylsulfanyl)propylamine + CO2. It functions in the pathway amine and polyamine biosynthesis; S-adenosylmethioninamine biosynthesis; S-adenosylmethioninamine from S-adenosyl-L-methionine: step 1/1. The protein is S-adenosylmethionine decarboxylase proenzyme (SAMDC) of Oryza sativa subsp. japonica (Rice).